The sequence spans 159 residues: Ribosome maturation factor RimP (159 aa).

The protein belongs to the RimP family.

The protein localises to the cytoplasm. In terms of biological role, required for maturation of 30S ribosomal subunits. This is Ribosome maturation factor RimP from Geotalea daltonii (strain DSM 22248 / JCM 15807 / FRC-32) (Geobacter daltonii).